Here is a 501-residue protein sequence, read N- to C-terminus: Alveolysin (501 aa).

Residues 1–32 (MKKKSNHLKGRKVLVSLLVSLQVFAFASISSA) form the signal peptide. 4 beta stranded membrane passes run 191 to 204 (QNQI…NAKV), 211 to 220 (IDFNAVANGE), 289 to 298 (SNDVQTAFKL), and 306 to 318 (QASG…YENS). The Conserved undecapeptide motif lies at 460–470 (ECTGLAWEWWR). The Cholesterol binding signature appears at 492–493 (TL).

This sequence belongs to the cholesterol-dependent cytolysin family. As to quaternary structure, homooligomeric pore complex of 35 to 50 subunits; when inserted in the host membrane.

It is found in the secreted. The protein resides in the host cell membrane. Its activity is regulated as follows. Inhibited by cholesterol and thiol reagents. In terms of biological role, a cholesterol-dependent toxin that causes cytolysis by forming pores in cholesterol containing host membranes. After binding to target membranes, the protein undergoes a major conformation change, leading to its insertion in the host membrane and formation of an oligomeric pore complex. Cholesterol is required for binding to host cell membranes, membrane insertion and pore formation; cholesterol binding is mediated by a Thr-Leu pair in the C-terminus. Can be reversibly inactivated by oxidation. This Paenibacillus alvei (Bacillus alvei) protein is Alveolysin (alv).